Consider the following 215-residue polypeptide: Cytochrome c biogenesis ATP-binding export protein CcmA (215 aa).

In terms of domain architecture, ABC transporter spans 3 to 211 (LTAEILAARR…KMTGFAGVDN (209 aa)). 35–42 (GKNGSGKS) is a binding site for ATP.

Belongs to the ABC transporter superfamily. CcmA exporter (TC 3.A.1.107) family. The complex is composed of two ATP-binding proteins (CcmA) and two transmembrane proteins (CcmB).

It is found in the cell inner membrane. It catalyses the reaction heme b(in) + ATP + H2O = heme b(out) + ADP + phosphate + H(+). Functionally, part of the ABC transporter complex CcmAB involved in the biogenesis of c-type cytochromes; once thought to export heme, this seems not to be the case, but its exact role is uncertain. Responsible for energy coupling to the transport system. This Rhizobium johnstonii (strain DSM 114642 / LMG 32736 / 3841) (Rhizobium leguminosarum bv. viciae) protein is Cytochrome c biogenesis ATP-binding export protein CcmA.